The sequence spans 255 residues: Aquaporin TIP4-1 (255 aa).

2 consecutive transmembrane segments (helical) span residues 25-45 (AVLA…SAAM) and 61-81 (TLAA…TAGF). An NPA 1 motif is present at residues 89–91 (NPA). A run of 3 helical transmembrane segments spans residues 108–128 (VLYV…LRFL), 148–168 (GLVM…AMIL), and 176–196 (AIGP…GGNF). Positions 202 to 204 (NPA) match the NPA 2 motif. A helical transmembrane segment spans residues 223-243 (WIGPLLGGPLAGFVYESLFLV).

It belongs to the MIP/aquaporin (TC 1.A.8) family. TIP (TC 1.A.8.10) subfamily.

The protein localises to the vacuole membrane. Its function is as follows. Aquaporins facilitate the transport of water and small neutral solutes across cell membranes. This chain is Aquaporin TIP4-1 (TIP4-1), found in Zea mays (Maize).